A 576-amino-acid polypeptide reads, in one-letter code: Boron transporter 1 (576 aa).

Over 1 to 84 (MSNESTRVTV…SDWVDAFNYR (84 aa)) the chain is Cytoplasmic. Residues 19-48 (ECAQALERTNDELDRESSVSESRSDEESHE) are disordered. The segment covering 26–48 (RTNDELDRESSVSESRSDEESHE) has biased composition (basic and acidic residues). Residues 85 to 105 (VIPSIVDTYFNNLLPAIAFAQ) traverse the membrane as a helical segment. Residues 106–116 (DMFDRTDNSYG) lie on the Extracellular side of the membrane. Residues 117–134 (VNEVLLSSAMAGIVFGVL) traverse the membrane as a helical segment. The Cytoplasmic segment spans residues 135–140 (GGQPLC). Residues 141-160 (IVGVTGPISIFNYTVYEIIK) form a helical membrane-spanning segment. The Extracellular portion of the chain corresponds to 161–165 (PLNTS). A helical membrane pass occupies residues 166–186 (YFGFMFWICMWSMIFHLVLAF). The Cytoplasmic portion of the chain corresponds to 187–192 (TNAVCL). Residues 193 to 213 (LQYVTTFPCDIFGLFINVVYI) traverse the membrane as a helical segment. Residues 214 to 235 (QKGIQILTRQFSAKSGEKSVQD) lie on the Extracellular side of the membrane. Residues 236 to 256 (GFASVVVALVMTAFGLFFKLF) form a helical membrane-spanning segment. Topologically, residues 257–274 (HYYPLFSHRIRTFISDYS) are cytoplasmic. The helical transmembrane segment at 275 to 295 (TALSVLFWSSFTHFGGYLHDV) threads the bilayer. At 296–329 (KFKKLPITKAFFPTSKVNRPQNTWLAYEPIPVKD) the chain is on the extracellular side. Residues 330-350 (VFIALPFGIFLTILFYFDHNV) traverse the membrane as a helical segment. Residues 351-373 (SSLMAQRHQYKLKKPSSFHYDFA) lie on the Cytoplasmic side of the membrane. Residues 374-394 (LLGLTTCISGVLGIPAPNGLI) form a helical membrane-spanning segment. Over 395–438 (PQAPLHTETLLVRDSNQKVISCVEQRFTNTFQGLMILGTMTRPL) the chain is Extracellular. Residues 439-459 (LVCLGEIPQAVLSGLFFIMGI) form a helical membrane-spanning segment. Residues 460–495 (NGLMTNSIIQRLVFLFSDPNRRDNTSPLMKVSKKSM) lie on the Cytoplasmic side of the membrane. A helical transmembrane segment spans residues 496-516 (LIFLSFSLTGFAGEFAITNTI). Over 517-518 (AA) the chain is Extracellular. A helical transmembrane segment spans residues 519 to 539 (IGFPLVLLLSVLVSFSFAYIF). Residues 540-576 (PTEELKILDTNVAQKFTIKNLLLENIRDAKFCDKHED) lie on the Cytoplasmic side of the membrane.

The protein belongs to the anion exchanger (TC 2.A.31) family.

It is found in the cell membrane. It localises to the vacuole membrane. Functionally, functions in boric acid/borate export across the plasma membrane, and thereby protects yeast cells from boron toxicity. Involved in the trafficking of proteins to the vacuole. This chain is Boron transporter 1 (BOR1), found in Saccharomyces cerevisiae (strain ATCC 204508 / S288c) (Baker's yeast).